A 599-amino-acid chain; its full sequence is Proteasome-associated ATPase (599 aa).

Residues 1–22 (MPHGHPGSQPDEGGELSNGSSS) are disordered. A coiled-coil region spans residues 21–97 (SSGELTAQIR…LREEVDRLAQ (77 aa)). 286-291 (GCGKTL) contacts ATP. The segment at 598–599 (YL) is docks into pockets in the proteasome alpha-ring.

It belongs to the AAA ATPase family. In terms of assembly, homohexamer. Assembles into a hexameric ring structure that caps the 20S proteasome core. Strongly interacts with the prokaryotic ubiquitin-like protein Pup through a hydrophobic interface; the interacting region of ARC lies in its N-terminal coiled-coil domain. There is one Pup binding site per ARC hexamer ring. Upon ATP-binding, the C-terminus of ARC interacts with the alpha-rings of the proteasome core, possibly by binding to the intersubunit pockets.

The protein operates within protein degradation; proteasomal Pup-dependent pathway. In terms of biological role, ATPase which is responsible for recognizing, binding, unfolding and translocation of pupylated proteins into the bacterial 20S proteasome core particle. May be essential for opening the gate of the 20S proteasome via an interaction with its C-terminus, thereby allowing substrate entry and access to the site of proteolysis. Thus, the C-termini of the proteasomal ATPase may function like a 'key in a lock' to induce gate opening and therefore regulate proteolysis. This chain is Proteasome-associated ATPase, found in Actinosynnema mirum (strain ATCC 29888 / DSM 43827 / JCM 3225 / NBRC 14064 / NCIMB 13271 / NRRL B-12336 / IMRU 3971 / 101).